The chain runs to 272 residues: Undecaprenyl-diphosphatase (272 aa).

The next 7 helical transmembrane spans lie at 2-22 (FDII…FLPI), 43-63 (FINM…ILLY), 82-102 (WQLW…GLPL), 110-130 (LHTP…FIIL), 185-205 (YVAT…VSIL), 224-244 (VLMT…KWLL), and 252-272 (FKPF…VMFI).

The protein belongs to the UppP family.

It localises to the cell membrane. It carries out the reaction di-trans,octa-cis-undecaprenyl diphosphate + H2O = di-trans,octa-cis-undecaprenyl phosphate + phosphate + H(+). In terms of biological role, catalyzes the dephosphorylation of undecaprenyl diphosphate (UPP). Confers resistance to bacitracin. This Lacticaseibacillus paracasei (strain ATCC 334 / BCRC 17002 / CCUG 31169 / CIP 107868 / KCTC 3260 / NRRL B-441) (Lactobacillus paracasei) protein is Undecaprenyl-diphosphatase.